The sequence spans 448 residues: Tubulin beta-1 chain (448 aa).

Residues Gln-11, Glu-69, Ser-138, Gly-142, Thr-143, Gly-144, Asn-204, and Asn-226 each coordinate GTP. Glu-69 lines the Mg(2+) pocket. Residues 428 to 448 (AGIGDDEEEDEEGVMGEEIDA) form a disordered region. Positions 430-448 (IGDDEEEDEEGVMGEEIDA) are enriched in acidic residues.

Belongs to the tubulin family. In terms of assembly, dimer of alpha and beta chains. A typical microtubule is a hollow water-filled tube with an outer diameter of 25 nm and an inner diameter of 15 nM. Alpha-beta heterodimers associate head-to-tail to form protofilaments running lengthwise along the microtubule wall with the beta-tubulin subunit facing the microtubule plus end conferring a structural polarity. Microtubules usually have 13 protofilaments but different protofilament numbers can be found in some organisms and specialized cells. Mg(2+) serves as cofactor.

It localises to the cytoplasm. It is found in the cytoskeleton. Its function is as follows. Tubulin is the major constituent of microtubules, a cylinder consisting of laterally associated linear protofilaments composed of alpha- and beta-tubulin heterodimers. Microtubules grow by the addition of GTP-tubulin dimers to the microtubule end, where a stabilizing cap forms. Below the cap, tubulin dimers are in GDP-bound state, owing to GTPase activity of alpha-tubulin. This is Tubulin beta-1 chain (TUB-1) from Echinococcus multilocularis (Fox tapeworm).